A 305-amino-acid chain; its full sequence is GMP synthase [glutamine-hydrolyzing] subunit B (305 aa).

One can recognise a GMPS ATP-PPase domain in the interval 2–184; it reads VNIEKFIDQA…LGLPAEIQHR (183 aa). An ATP-binding site is contributed by 29-35; the sequence is SGGVDSS.

In terms of assembly, heterodimer composed of a glutamine amidotransferase subunit (A) and a GMP-binding subunit (B).

The catalysed reaction is XMP + L-glutamine + ATP + H2O = GMP + L-glutamate + AMP + diphosphate + 2 H(+). The protein operates within purine metabolism; GMP biosynthesis; GMP from XMP (L-Gln route): step 1/1. Its function is as follows. Catalyzes the synthesis of GMP from XMP. This Methanoculleus marisnigri (strain ATCC 35101 / DSM 1498 / JR1) protein is GMP synthase [glutamine-hydrolyzing] subunit B.